Here is a 207-residue protein sequence, read N- to C-terminus: Protein-L-isoaspartate O-methyltransferase (207 aa).

Residue serine 56 is part of the active site.

It belongs to the methyltransferase superfamily. L-isoaspartyl/D-aspartyl protein methyltransferase family.

The protein localises to the cytoplasm. It carries out the reaction [protein]-L-isoaspartate + S-adenosyl-L-methionine = [protein]-L-isoaspartate alpha-methyl ester + S-adenosyl-L-homocysteine. In terms of biological role, catalyzes the methyl esterification of L-isoaspartyl residues in peptides and proteins that result from spontaneous decomposition of normal L-aspartyl and L-asparaginyl residues. It plays a role in the repair and/or degradation of damaged proteins. The protein is Protein-L-isoaspartate O-methyltransferase of Pyrobaculum neutrophilum (strain DSM 2338 / JCM 9278 / NBRC 100436 / V24Sta) (Thermoproteus neutrophilus).